The chain runs to 344 residues: Axoneme-associated protein mst101(1) (344 aa).

12 repeat units span residues 74-89, 90-105, 106-121, 122-137, 138-153, 154-169, 170-185, 186-201, 202-217, 218-233, 234-249, and 250-265. The segment at 74-344 is 17 X 16 AA approximate tandem repeats of K-K-K-C-X-E-X-A-[KQ]-K-X-X-E-X-A-X; sequence KKKCAEAAKK…AAQKKCEPKK (271 aa). The disordered stretch occupies residues 206 to 244; sequence KEAAEKKKCEERAKKEKEAAEKKKCEERAKKEKEAAEKK. One copy of the 13; approximate repeat lies at 266–281; the sequence is AQKKKCAELAKKAKEA. Residues 282–297 form a 14; approximate repeat; that stretch reads AEKKKCAKKAGEKGSK. A compositionally biased stretch (basic and acidic residues) spans 285-315; sequence KKCAKKAGEKGSKQSGSDKGKKNGKKNDMKN. Positions 285–318 are disordered; it reads KKCAKKAGEKGSKQSGSDKGKKNGKKNDMKNKCA. Residues 298–313 form a 15; approximate repeat; it reads QSGSDKGKKNGKKNDM. Copy 16 of the repeat occupies 314-329; that stretch reads KNKCAMLAKKAKEEAL. The 17; truncated repeat unit spans residues 330–344; the sequence is KKKCAAAQKKCEPKK.

Testis. Located in spermatocytes and spermatid bundles.

The protein localises to the cytoplasm. In terms of biological role, possible structural role in the sperm tail. It is associated with axonemal structures. The polypeptide is Axoneme-associated protein mst101(1) (mst101(1)) (Drosophila hydei (Fruit fly)).